The following is a 474-amino-acid chain: UDP-glycosyltransferase 71E1 (474 aa).

UDP-alpha-D-glucose is bound by residues Ser-275, 341-342 (WA), 359-367 (HCGWNSTLE), and 381-384 (YAEQ).

It belongs to the UDP-glycosyltransferase family.

In terms of biological role, may glycosylate diterpenes or flavonols in leaves. The sequence is that of UDP-glycosyltransferase 71E1 from Stevia rebaudiana (Stevia).